The sequence spans 1070 residues: Potassium/chloride cotransporter 3 (1070 aa).

15 consecutive transmembrane segments (helical) span residues 92-112, 114-134, 142-162, 174-194, 196-216, 228-248, 251-271, 400-420, 433-453, 473-493, 534-554, 557-577, 600-620, 791-811, and 827-847; these read GVML…TMFI, LFWV…AICC, ISLS…YFII, VGIL…VGGV, VILM…LHDT, LYGT…VKFV, LAPV…GGGI, FFML…GTNM, VGTI…AILF, TMVV…GAFL, PFLG…LGAV, IAEV…LIAV, LLGA…LACI, LVLF…LIVT, and FIDI…AYLL.

In terms of tissue distribution, expressed in the amphid sheath glia and the cephalic sheath glia. Also expressed in the inner labial and outer labial sheath and socket glia and as well as phasmid sheath glia.

It localises to the cell membrane. Probable potassium/chloride cotransporter that functions in the amphid sheath glial cells to regulate thermotaxis behavior. By maintaining chloride homeostasis, negatively regulates guanylate cyclase gcy-8 in the thermosensory AFD neurons and thereby controls the microvilli receptive ending morphology of the AFD neurons and thermotaxis. Modulates the temperature-evoked neuronal activity of the AFD neurons such as calcium responses to temperature gradients. Might also play a role in the chemotaxis behavior mediated by the sensory neurons AWA and AWC. This Caenorhabditis elegans protein is Potassium/chloride cotransporter 3 (kcc-3).